The primary structure comprises 271 residues: Norsolorinic acid ketoreductase (271 aa).

A disordered region spans residues 1 to 22 (MNGSLSQHDQERLSTPYRDGPP). NADP(+)-binding residues include Ile-36, Asn-112, Tyr-185, Lys-189, Val-216, and Thr-218. Tyr-185 functions as the Proton donor in the catalytic mechanism. The active-site Lowers pKa of active site Tyr is the Lys-189.

This sequence belongs to the short-chain dehydrogenases/reductases (SDR) family.

It is found in the cytoplasm. The protein localises to the cytosol. It localises to the vacuole. It catalyses the reaction (1'S)-averantin + NADP(+) = norsolorinic acid + NADPH + H(+). The protein operates within mycotoxin biosynthesis; aflatoxin biosynthesis. Its function is as follows. Norsolorinic acid ketoreductase; part of the gene cluster that mediates the biosynthesis of aflatoxins, a group of polyketide-derived furanocoumarins, and part of the most toxic and carcinogenic compounds among the known mycotoxins. The four major aflatoxins produced by A.parasiticus are aflatoxin B1 (AFB1), aflatoxin B2 (AFB2), aflatoxin G1 (AFG1) and aflatoxin G2 (AFG2). Within the aflatoxin pathway, the norsolorinic acid ketoreductase aflD performs the second step by catalyzing the dehydration of norsolorinic acid (NOR) to form (1'S)-averantin (AVN). The biosynthesis of aflatoxins begins with the norsolorinic acid synthase aflC that combines a hexanoyl starter unit produced by the fatty acid synthase aflA/aflB and 7 malonyl-CoA extender units to synthesize the precursor NOR. The second step is the conversion of NOR to averantin and requires the norsolorinic acid ketoreductase aflD, which catalyzes the dehydration of norsolorinic acid to form (1'S)-averantin. The norsolorinic acid reductases aflE and aflF may also play a role in the conversion of NOR to AVN. The cytochrome P450 monooxygenase aflG then catalyzes the hydroxylation of AVN to 5'hydroxyaverantin (HAVN). The next step is performed by the 5'-hydroxyaverantin dehydrogenase aflH that transforms HAVN to 5'-oxoaverantin (OAVN) which is further converted to averufin (AVF) by aflK that plays a dual role in the pathway, as a 5'-oxoaverantin cyclase that mediates conversion of 5'-oxoaverantin, as well as a versicolorin B synthase in a later step in the pathway. The averufin oxidase aflI catalyzes the conversion of AVF to versiconal hemiacetal acetate (VHA). VHA is then the substrate for the versiconal hemiacetal acetate esterase aflJ to yield versiconal (VAL). Versicolorin B synthase aflK then converts VAL to versicolorin B (VERB) by closing the bisfuran ring of aflatoxin which is required for DNA-binding, thus giving to aflatoxin its activity as a mutagen. Then, the activity of the versicolorin B desaturase aflL leads to versicolorin A (VERA). A branch point starts from VERB since it can also be converted to dihydrodemethylsterigmatocystin (DMDHST), probably also by aflL, VERA being a precursor for aflatoxins B1 and G1, and DMDHST for aflatoxins B2 and G2. Next, the versicolorin reductase aflM and the cytochrome P450 monooxygenase aflN are involved in conversion of VERA to demethylsterigmatocystin (DMST). AflX and aflY seem also involved in this step, through probable aflX-mediated epoxide ring-opening step following versicolorin A oxidation and aflY-mediated Baeyer-Villiger oxidation required for the formation of the xanthone ring. The methyltransferase aflO then leads to the modification of DMST to sterigmatocystin (ST), and of DMDHST to dihydrosterigmatocystin (DHST). Both ST and DHST are then substrates of the O-methyltransferase aflP to yield O-methylsterigmatocystin (OMST) and dihydro-O-methylsterigmatocystin (DHOMST), respectively. Finally OMST is converted to aflatoxins B1 and G1, and DHOMST to aflatoxins B2 and G2, via the action of several enzymes including O-methylsterigmatocystin oxidoreductase aflQ, the cytochrome P450 monooxygenase aflU, but also the NADH-dependent flavin oxidoreductase nadA which is specifically required for the synthesis of AFG1. This chain is Norsolorinic acid ketoreductase, found in Aspergillus parasiticus (strain ATCC 56775 / NRRL 5862 / SRRC 143 / SU-1).